Reading from the N-terminus, the 221-residue chain is Nuclear phosphoprotein UL3 homolog (221 aa).

The protein belongs to the alphaherpesvirinae HHV-1 UL3 family. Phosphorylated.

It localises to the host nucleus. This chain is Nuclear phosphoprotein UL3 homolog, found in Varicella-zoster virus (strain Dumas) (HHV-3).